Consider the following 379-residue polypeptide: Queuine tRNA-ribosyltransferase (379 aa).

The active-site Proton acceptor is Asp-89. Residues 89 to 93 (DSGGF), Asp-143, Gln-187, and Gly-214 each bind substrate. The tract at residues 245–251 (GVGKPED) is RNA binding. The Nucleophile role is filled by Asp-264. The tract at residues 269–273 (TRNAR) is RNA binding; important for wobble base 34 recognition. 4 residues coordinate Zn(2+): Cys-302, Cys-304, Cys-307, and His-333.

It belongs to the queuine tRNA-ribosyltransferase family. In terms of assembly, homodimer. Within each dimer, one monomer is responsible for RNA recognition and catalysis, while the other monomer binds to the replacement base PreQ1. Requires Zn(2+) as cofactor.

The catalysed reaction is 7-aminomethyl-7-carbaguanine + guanosine(34) in tRNA = 7-aminomethyl-7-carbaguanosine(34) in tRNA + guanine. Its pathway is tRNA modification; tRNA-queuosine biosynthesis. In terms of biological role, catalyzes the base-exchange of a guanine (G) residue with the queuine precursor 7-aminomethyl-7-deazaguanine (PreQ1) at position 34 (anticodon wobble position) in tRNAs with GU(N) anticodons (tRNA-Asp, -Asn, -His and -Tyr). Catalysis occurs through a double-displacement mechanism. The nucleophile active site attacks the C1' of nucleotide 34 to detach the guanine base from the RNA, forming a covalent enzyme-RNA intermediate. The proton acceptor active site deprotonates the incoming PreQ1, allowing a nucleophilic attack on the C1' of the ribose to form the product. After dissociation, two additional enzymatic reactions on the tRNA convert PreQ1 to queuine (Q), resulting in the hypermodified nucleoside queuosine (7-(((4,5-cis-dihydroxy-2-cyclopenten-1-yl)amino)methyl)-7-deazaguanosine). The chain is Queuine tRNA-ribosyltransferase from Edwardsiella ictaluri (strain 93-146).